The sequence spans 731 residues: Inclusion body clearance protein IML2 (731 aa).

A disordered region spans residues 1–26 (MFRVFGSFGSKGNQSSGEEQSTKTKQ). Positions 10 to 26 (SKGNQSSGEEQSTKTKQ) are enriched in polar residues. 3 positions are modified to phosphoserine: Ser-265, Ser-268, and Ser-378. The residue at position 380 (Thr-380) is a Phosphothreonine. 2 positions are modified to phosphoserine: Ser-383 and Ser-392.

This sequence belongs to the IML2 family. As to quaternary structure, interacts with lipid droplet proteins PET10 and PDR16.

It is found in the cytoplasm. The protein resides in the nucleus. In terms of biological role, inclusion body (IB) resident protein that interacts strongly with lipid droplet (LD) proteins. Involved in LD-mediated IB clearing after protein folding stress, probably by enabling access to the IBs of an LD-stored soluble sterol derivative that acts as a chaperone in inclusion clearing. This chain is Inclusion body clearance protein IML2, found in Saccharomyces cerevisiae (strain ATCC 204508 / S288c) (Baker's yeast).